The chain runs to 396 residues: Phosphoglycerate kinase (396 aa).

Substrate contacts are provided by residues 21–23, Arg36, 59–62, Arg113, and Arg146; these read DLN and HLGR. ATP-binding positions include Lys197, Glu319, and 345–348; that span reads GGDT.

The protein belongs to the phosphoglycerate kinase family. In terms of assembly, monomer.

It is found in the cytoplasm. It catalyses the reaction (2R)-3-phosphoglycerate + ATP = (2R)-3-phospho-glyceroyl phosphate + ADP. It functions in the pathway carbohydrate degradation; glycolysis; pyruvate from D-glyceraldehyde 3-phosphate: step 2/5. This chain is Phosphoglycerate kinase, found in Legionella pneumophila (strain Corby).